Reading from the N-terminus, the 272-residue chain is Heat stress transcription factor A-7a (272 aa).

Residues 1–26 are disordered; that stretch reads MMNPFLPEGCDPPPPPQPMEGLHENA. The DNA-binding element occupies 27 to 121; it reads PPPFLTKTFE…LLKNIKRRNP (95 aa). A hydrophobic repeat HR-A/B region spans residues 132–186; the sequence is ACNELRREKQVLMMEIVSLRQQQQTTKSYIKAMEQRIEGTERKQRQMMSFLARAM. The Bipartite nuclear localization signal motif lies at 201-216; the sequence is KKIKELEDNESAKRKR. Positions 203–212 are enriched in basic and acidic residues; the sequence is IKELEDNESA. The segment at 203–223 is disordered; the sequence is IKELEDNESAKRKRGSSSMSE. An AHA motif is present at residues 256–265; sequence DGFWEELLSD.

This sequence belongs to the HSF family. Class A subfamily. Homotrimer. Exhibits temperature-dependent phosphorylation.

It is found in the nucleus. Its function is as follows. Transcriptional activator that specifically binds DNA sequence 5'-AGAAnnTTCT-3' known as heat shock promoter elements (HSE). This is Heat stress transcription factor A-7a (HSFA7A) from Arabidopsis thaliana (Mouse-ear cress).